Here is a 307-residue protein sequence, read N- to C-terminus: 2-dehydropantoate 2-reductase (307 aa).

Residues glycine 7 to glycine 12, asparagine 102, and alanine 128 contribute to the NADP(+) site. A substrate-binding site is contributed by asparagine 102. Lysine 184 functions as the Proton donor in the catalytic mechanism. 3 residues coordinate substrate: asparagine 188, asparagine 192, and serine 255. Glutamate 268 is a binding site for NADP(+).

The protein belongs to the ketopantoate reductase family.

The protein resides in the cytoplasm. It carries out the reaction (R)-pantoate + NADP(+) = 2-dehydropantoate + NADPH + H(+). It participates in cofactor biosynthesis; (R)-pantothenate biosynthesis; (R)-pantoate from 3-methyl-2-oxobutanoate: step 2/2. Functionally, catalyzes the NADPH-dependent reduction of ketopantoate into pantoic acid. The sequence is that of 2-dehydropantoate 2-reductase (apbA) from Streptococcus pyogenes serotype M6 (strain ATCC BAA-946 / MGAS10394).